Consider the following 197-residue polypeptide: Peptide deformylase (197 aa).

Fe cation-binding residues include C106 and H148. E149 is a catalytic residue. Fe cation is bound at residue H152.

It belongs to the polypeptide deformylase family. It depends on Fe(2+) as a cofactor.

It catalyses the reaction N-terminal N-formyl-L-methionyl-[peptide] + H2O = N-terminal L-methionyl-[peptide] + formate. Its function is as follows. Removes the formyl group from the N-terminal Met of newly synthesized proteins. Requires at least a dipeptide for an efficient rate of reaction. N-terminal L-methionine is a prerequisite for activity but the enzyme has broad specificity at other positions. The chain is Peptide deformylase from Mycobacterium bovis (strain ATCC BAA-935 / AF2122/97).